Consider the following 465-residue polypeptide: Methionine aminopeptidase 2-2 (465 aa).

Over residues 1–13 (MGSKTPNDHRRGP) the composition is skewed to basic and acidic residues. Residues 1 to 92 (MGSKTPNDHR…KKKTLLGGLQ (92 aa)) are disordered. A compositionally biased stretch (acidic residues) spans 44–55 (GETEDGEDEDDD). The span at 71–86 (TKKKNKRKKNKKKKKT) shows a compositional bias: basic residues. His217 serves as a coordination point for substrate. A divalent metal cation contacts are provided by Asp238, Asp249, and His318. Residue His326 participates in substrate binding. A divalent metal cation-binding residues include Glu351 and Glu446.

This sequence belongs to the peptidase M24A family. Methionine aminopeptidase eukaryotic type 2 subfamily. Co(2+) is required as a cofactor. The cofactor is Zn(2+). Requires Mn(2+) as cofactor. It depends on Fe(2+) as a cofactor.

Its subcellular location is the cytoplasm. It catalyses the reaction Release of N-terminal amino acids, preferentially methionine, from peptides and arylamides.. Cotranslationally removes the N-terminal methionine from nascent proteins. The N-terminal methionine is often cleaved when the second residue in the primary sequence is small and uncharged (Met-Ala-, Cys, Gly, Pro, Ser, Thr, or Val). The protein is Methionine aminopeptidase 2-2 of Blastomyces gilchristii (strain SLH14081) (Blastomyces dermatitidis).